Consider the following 762-residue polypeptide: Poly(A) RNA polymerase CID14 (762 aa).

Residues 1-123 (MPTGFQPAES…KKEEQKAAER (123 aa)) form a disordered region. Residues 50–62 (KKNKKDKKKKGSK) are compositionally biased toward basic residues. Composition is skewed to basic and acidic residues over residues 65 to 75 (QPVDEPDKKDG) and 99 to 123 (RKRD…AAER). ATP is bound at residue serine 189. Residues aspartate 200 and aspartate 202 each contribute to the Mg(2+) site. ATP is bound by residues glycine 266, lysine 291, serine 309, and tyrosine 310. The PAP-associated domain occupies 336–393 (NLGTLLIEFFELFGRNFNYNDVGISIRRGGFYFSKASRGWMKGQSFLLSIEDPQDKDN). The tract at residues 482–762 (SIPLGADPKP…LGQSSGDMSD (281 aa)) is disordered. Residues 536 to 549 (VEDDELESDDDSDS) are compositionally biased toward acidic residues. A compositionally biased stretch (polar residues) spans 572-581 (RTANSRSTSR). Lysine 610 contacts ATP. Acidic residues-rich tracts occupy residues 677–687 (GEEEEEIDSDE) and 697–707 (SDGDLGSEDEI). Positions 753 to 762 (LGQSSGDMSD) are enriched in polar residues.

It belongs to the DNA polymerase type-B-like family. Component of the TRAMP complex. Requires Mg(2+) as cofactor. Mn(2+) serves as cofactor.

It localises to the nucleus. The protein localises to the nucleolus. The enzyme catalyses RNA(n) + ATP = RNA(n)-3'-adenine ribonucleotide + diphosphate. Its function is as follows. Required for 3' polyadenylation of the 5.8S and 25S rRNAs as a prelude to their degradation in the exosome. Involved in the nucleolar organization to ensure faithful chromosome segregation during mitosis. This is Poly(A) RNA polymerase CID14 from Cryptococcus neoformans var. neoformans serotype D (strain JEC21 / ATCC MYA-565) (Filobasidiella neoformans).